Consider the following 102-residue polypeptide: Small ribosomal subunit protein uS10 (102 aa).

It belongs to the universal ribosomal protein uS10 family. In terms of assembly, part of the 30S ribosomal subunit.

In terms of biological role, involved in the binding of tRNA to the ribosomes. In Thiobacillus denitrificans (strain ATCC 25259 / T1), this protein is Small ribosomal subunit protein uS10.